We begin with the raw amino-acid sequence, 61 residues long: MPYVTVKMLEGRTEEQKKALAEKVTAAVSETTGAPEENIVVFIEEMSKNHYAVGGKRLSDK.

Catalysis depends on Pro-2, which acts as the Proton acceptor; via imino nitrogen.

Belongs to the 4-oxalocrotonate tautomerase family.

The polypeptide is Probable tautomerase BA_5626/GBAA_5626/BAS5226 (Bacillus anthracis).